Here is a 362-residue protein sequence, read N- to C-terminus: Aminomethyltransferase (362 aa).

The protein belongs to the GcvT family. The glycine cleavage system is composed of four proteins: P, T, L and H.

It catalyses the reaction N(6)-[(R)-S(8)-aminomethyldihydrolipoyl]-L-lysyl-[protein] + (6S)-5,6,7,8-tetrahydrofolate = N(6)-[(R)-dihydrolipoyl]-L-lysyl-[protein] + (6R)-5,10-methylene-5,6,7,8-tetrahydrofolate + NH4(+). In terms of biological role, the glycine cleavage system catalyzes the degradation of glycine. The sequence is that of Aminomethyltransferase from Pseudothermotoga lettingae (strain ATCC BAA-301 / DSM 14385 / NBRC 107922 / TMO) (Thermotoga lettingae).